Consider the following 426-residue polypeptide: Tubby protein homolog 1 (426 aa).

The segment at 16 to 28 (QRKMLEDKQKQKR) is required for localization to cilia in AWB sensory neurons. A disordered region spans residues 19–39 (MLEDKQKQKRHQSAGSVRTTS).

Belongs to the TUB family. As to quaternary structure, interacts with rgb-3. In terms of tissue distribution, expressed in ciliated sensory neurons.

The protein localises to the cytoplasm. Its subcellular location is the cell projection. It is found in the axon. The protein resides in the dendrite. It localises to the cilium. Functionally, has a role in fat regulation independent of daf-16. Implicated in ciliar sensory function which is required for normal sensory behavior such as chemotaxis. Required for extension and growth of sensory neuronal cilia during postembryonic development, potentially via mediating signaling protein transport and localization of PI(4,5)P2 to the ciliary base. Functions in life span control via the insulin/IGF-1 pathway. Thought to be involved in neuronal trafficking. This chain is Tubby protein homolog 1, found in Caenorhabditis elegans.